The sequence spans 233 residues: B-cell lymphoma/leukemia 10 (233 aa).

At Met-1 the chain carries N-acetylmethionine. Residues 13–101 form the CARD domain; the sequence is LTEVKKDALE…QNFLIQKITD (89 aa). Glycyl lysine isopeptide (Lys-Gly) (interchain with G-Cter in ubiquitin) cross-links involve residues Lys-17, Lys-31, and Lys-63. Residues 130–141 are compositionally biased toward polar residues; that stretch reads TNNLSRSNSDES. Disordered regions lie at residues 130 to 149 and 186 to 233; these read TNNL…KQRP and SFSS…LSRQ. At Ser-138 the chain carries Phosphoserine. Pro residues predominate over residues 195 to 205; it reads PGDPGAPPLPP.

As to quaternary structure, homomultimer; homooligomerized following recruitment by CARD domain-containing proteins that form a nucleating helical template that recruits BCL10 via CARD-CARD interaction. Self-associates by CARD-CARD interaction and interacts with other CARD-proteins such as CARD9, CARD10, CARD11 and CARD14. Forms a complex with CARD14 and MALT1; resulting in the formation of a CBM (CARD14-BCL10-MALT1) complex. Forms a complex with CARD11 and MALT1; resulting in the formation of a CBM (CARD11-BCL10-MALT1) complex. Forms a complex with CARD9 and MALT1; resulting in the formation of a CBM (CARD9-BCL10-MALT1) complex. Found in a membrane raft complex, at least composed of BCL10, CARD11, DPP4 and IKBKB. Binds caspase-9 with its C-terminal domain. Interacts with TRAF2 and BIRC2/c-IAP2. Interacts with PELI2 and SOCS3; these interactions may be mutually exclusive. In terms of processing, phosphorylated. Phosphorylation results in dissociation from TRAF2 and binding to BIRC2/c-IAP2. Phosphorylated by IKBKB/IKKB. Ubiquitinated via both 'Lys-63'-linked and linear ('Met-1'-linked) polyubiquitin chains in response to T-cell receptor (TCR) activation. Ubiquitination is recognized by IKBKG/NEMO, the regulatory subunit of I-kappa-B kinase (IKK), and is required for TCR-induced NF-kappa-B activation. Linear ubiquitination at Lys-17, Lys-31 and Lys-63 is mediated by RNF31/HOIP; linear ubiquitination is recognized with much higher affinity than 'Lys-63'-linked ubiquitin by IKBKG/NEMO. CARD11 is required for linear ubiquitination by HOIP by promoting the targeting of BCL10 to RNF31/HOIP. Post-translationally, proteolytically cleaved by MALT1; required for T-cell activation.

It is found in the cytoplasm. Its subcellular location is the perinuclear region. It localises to the membrane raft. Functionally, plays a key role in both adaptive and innate immune signaling by bridging CARD domain-containing proteins to immune activation. Acts by channeling adaptive and innate immune signaling downstream of CARD domain-containing proteins CARD9, CARD11 and CARD14 to activate NF-kappa-B and MAP kinase p38 (MAPK11, MAPK12, MAPK13 and/or MAPK14) pathways which stimulate expression of genes encoding pro-inflammatory cytokines and chemokines. Recruited by activated CARD domain-containing proteins: homooligomerized CARD domain-containing proteins form a nucleating helical template that recruits BCL10 via CARD-CARD interaction, thereby promoting polymerization of BCL10, subsequent recruitment of MALT1 and formation of a CBM complex. This leads to activation of NF-kappa-B and MAP kinase p38 (MAPK11, MAPK12, MAPK13 and/or MAPK14) pathways which stimulate expression of genes encoding pro-inflammatory cytokines and chemokines. Activated by CARD9 downstream of C-type lectin receptors; CARD9-mediated signals are essential for antifungal immunity. Activated by CARD11 downstream of T-cell receptor (TCR) and B-cell receptor (BCR). Promotes apoptosis, pro-caspase-9 maturation and activation of NF-kappa-B via NIK and IKK. This Rattus norvegicus (Rat) protein is B-cell lymphoma/leukemia 10.